Reading from the N-terminus, the 634-residue chain is 1-deoxy-D-xylulose-5-phosphate synthase (634 aa).

Residues His-77 and 118-120 (GHA) each bind thiamine diphosphate. Asp-149 lines the Mg(2+) pocket. Thiamine diphosphate is bound by residues 150 to 151 (AS), Asn-178, Tyr-289, and Glu-371. Asn-178 serves as a coordination point for Mg(2+).

The protein belongs to the transketolase family. DXPS subfamily. In terms of assembly, homodimer. Mg(2+) is required as a cofactor. The cofactor is thiamine diphosphate.

It catalyses the reaction D-glyceraldehyde 3-phosphate + pyruvate + H(+) = 1-deoxy-D-xylulose 5-phosphate + CO2. It functions in the pathway metabolic intermediate biosynthesis; 1-deoxy-D-xylulose 5-phosphate biosynthesis; 1-deoxy-D-xylulose 5-phosphate from D-glyceraldehyde 3-phosphate and pyruvate: step 1/1. Its function is as follows. Catalyzes the acyloin condensation reaction between C atoms 2 and 3 of pyruvate and glyceraldehyde 3-phosphate to yield 1-deoxy-D-xylulose-5-phosphate (DXP). The polypeptide is 1-deoxy-D-xylulose-5-phosphate synthase (Leptospira interrogans serogroup Icterohaemorrhagiae serovar copenhageni (strain Fiocruz L1-130)).